A 158-amino-acid chain; its full sequence is UPF0225 protein Pfl01_1218 (158 aa).

This sequence belongs to the UPF0225 family.

The chain is UPF0225 protein Pfl01_1218 from Pseudomonas fluorescens (strain Pf0-1).